The primary structure comprises 81 residues: Acyl carrier protein (81 aa).

The Carrier domain occupies 5–80 (EEIFSKVKSI…DIVSYIEKKL (76 aa)). Position 40 is an O-(pantetheine 4'-phosphoryl)serine (serine 40).

It belongs to the acyl carrier protein (ACP) family. In terms of processing, 4'-phosphopantetheine is transferred from CoA to a specific serine of apo-ACP by AcpS. This modification is essential for activity because fatty acids are bound in thioester linkage to the sulfhydryl of the prosthetic group.

Its subcellular location is the cytoplasm. Its pathway is lipid metabolism; fatty acid biosynthesis. Carrier of the growing fatty acid chain in fatty acid biosynthesis. The polypeptide is Acyl carrier protein (Thermotoga maritima (strain ATCC 43589 / DSM 3109 / JCM 10099 / NBRC 100826 / MSB8)).